Here is a 200-residue protein sequence, read N- to C-terminus: Adenylyl-sulfate kinase (200 aa).

Position 36-43 (36-43 (GLSGSGKS)) interacts with ATP. The Phosphoserine intermediate role is filled by Ser110.

This sequence belongs to the APS kinase family.

The enzyme catalyses adenosine 5'-phosphosulfate + ATP = 3'-phosphoadenylyl sulfate + ADP + H(+). It participates in sulfur metabolism; hydrogen sulfide biosynthesis; sulfite from sulfate: step 2/3. Functionally, catalyzes the synthesis of activated sulfate. The protein is Adenylyl-sulfate kinase of Clostridium acetobutylicum (strain ATCC 824 / DSM 792 / JCM 1419 / IAM 19013 / LMG 5710 / NBRC 13948 / NRRL B-527 / VKM B-1787 / 2291 / W).